Reading from the N-terminus, the 249-residue chain is Homeobox-leucine zipper protein HOX6 (249 aa).

The tract at residues 1–32 (MDGEEDSEWMMMDVGGKGGKGGGGGGAADRKK) is disordered. Gly residues predominate over residues 15 to 27 (GGKGGKGGGGGGA). Positions 27–86 (AADRKKRFSEEQIKSLESMFATQTKLEPRQKLQLARELGLQPRQVAIWFQNKRARWKSKQ) form a DNA-binding region, homeobox. A leucine-zipper region spans residues 85-129 (KQLEREYSALRDDYDALLCSYESLKKEKLALIKQLEKLAEMLQEP). Residues 194 to 249 (FLRPSSQHHPPPPHAGAGFTSSEPAADHQSFNFHSSWPSSTEQTCSSTPWWEFESE) form a disordered region. Polar residues predominate over residues 212-242 (FTSSEPAADHQSFNFHSSWPSSTEQTCSSTP).

This sequence belongs to the HD-ZIP homeobox family. Class I subfamily. Expressed in seedlings, roots, leaves, nodes, internodes, flowers and embryo.

It localises to the nucleus. In terms of biological role, probable transcription factor that binds to the DNA sequence 5'-CAAT[AT]ATTG-3'. This Oryza sativa subsp. indica (Rice) protein is Homeobox-leucine zipper protein HOX6 (HOX6).